Consider the following 274-residue polypeptide: 3-methyl-2-oxobutanoate hydroxymethyltransferase (274 aa).

Residues Asp-49 and Asp-88 each coordinate Mg(2+). Residues 49-50 (DS), Asp-88, and Lys-118 contribute to the 3-methyl-2-oxobutanoate site. Residue Glu-120 coordinates Mg(2+). Glu-187 functions as the Proton acceptor in the catalytic mechanism.

It belongs to the PanB family. In terms of assembly, homodecamer; pentamer of dimers. Mg(2+) serves as cofactor.

It localises to the cytoplasm. The catalysed reaction is 3-methyl-2-oxobutanoate + (6R)-5,10-methylene-5,6,7,8-tetrahydrofolate + H2O = 2-dehydropantoate + (6S)-5,6,7,8-tetrahydrofolate. It functions in the pathway cofactor biosynthesis; (R)-pantothenate biosynthesis; (R)-pantoate from 3-methyl-2-oxobutanoate: step 1/2. Its function is as follows. Catalyzes the reversible reaction in which hydroxymethyl group from 5,10-methylenetetrahydrofolate is transferred onto alpha-ketoisovalerate to form ketopantoate. This chain is 3-methyl-2-oxobutanoate hydroxymethyltransferase, found in Parvibaculum lavamentivorans (strain DS-1 / DSM 13023 / NCIMB 13966).